A 436-amino-acid polypeptide reads, in one-letter code: Serine/threonine-protein kinase STK11 (436 aa).

Ser31 carries the post-translational modification Phosphoserine. Lys44 and Lys48 each carry N6-acetyllysine. The interval 45 to 90 is sufficient for interaction with SIRT1; sequence LIGKYLMGDLLGEGSYGKVKEVLDSETLCRRAVKILKKKKLRRIPN. One can recognise a Protein kinase domain in the interval 49–309; the sequence is YLMGDLLGEG…IRQIRQHSWF (261 aa). ATP contacts are provided by residues 55-63 and Lys78; that span reads LGEGSYGKV. Residues Lys96 and Lys97 each carry the N6-acetyllysine modification. The active-site Proton acceptor is Asp176. Thr189 is modified (phosphothreonine; by autocatalysis). An N6-acetyllysine mark is found at Lys296 and Lys311. The residue at position 325 (Ser325) is a Phosphoserine. Thr336 carries the phosphothreonine; by autocatalysis modification. Thr366 is subject to Phosphothreonine; by ATM and autocatalysis. Residues 398–421 are disordered; that stretch reads TEPQLSSKVKPEGRPGTANPARKV. Residue Ser403 is modified to Phosphoserine. An N6-acetyllysine modification is found at Lys420. Cys422 carries the S-palmitoyl cysteine lipid modification. An N6-acetyllysine modification is found at Lys426. Ser431 bears the Phosphoserine; by autocatalysis, PKA, PKC/PRKCZ and RPS6KA1 mark. The residue at position 433 (Cys433) is a Cysteine methyl ester. Cys433 is lipidated: S-farnesyl cysteine. Lys434 carries the post-translational modification N6-acetyllysine. Residues 434 to 436 constitute a propeptide, removed in mature form; sequence KQQ.

The protein belongs to the protein kinase superfamily. CAMK Ser/Thr protein kinase family. LKB1 subfamily. In terms of assembly, catalytic component of a trimeric complex composed of STK11/LKB1, STRAD (STRADA or STRADB) and CAB39/MO25 (CAB39/MO25alpha or CAB39L/MO25beta): the complex tethers STK11/LKB1 in the cytoplasm and stimulates its catalytic activity. Found in a ternary complex composed of SMAD4, STK11/LKB1 and STK11IP. Interacts with p53/TP53, SMAD4, STK11IP and WDR6. Interacts with NR4A1. Interacts with NISCH; this interaction may increase STK11 activity. Interacts with PTEN, leading to PTEN phosphorylation. Interacts with SIRT1; the interaction deacetylates STK11. Interacts with CDKN1A. Requires Mg(2+) as cofactor. It depends on Mn(2+) as a cofactor. Phosphorylated by ATM at Thr-366 following ionizing radiation (IR). Phosphorylation at Ser-431 by RPS6KA1 and/or some PKA is required to inhibit cell growth. Phosphorylation at Ser-431 is also required during neuronal polarization to mediate phosphorylation of BRSK1 and BRSK2. Phosphorylation by PKC/PRKCZ at Ser-399 in isoform 2 promotes metformin (or peroxynitrite)-induced nuclear export of STK11 and activation of AMPK. UV radiation-induced phosphorylation at Thr-366 mediates CDKN1A degradation. In terms of processing, acetylated. Deacetylation at Lys-48 enhances cytoplasmic localization and kinase activity in vitro. As to expression, widely expressed. Predominantly expressed in testis (at protein level). In terms of tissue distribution, expressed in adult brain and liver and absent from tissues derived from postnatal day 7.

It localises to the nucleus. The protein resides in the cytoplasm. Its subcellular location is the membrane. The protein localises to the mitochondrion. The enzyme catalyses L-seryl-[protein] + ATP = O-phospho-L-seryl-[protein] + ADP + H(+). It catalyses the reaction L-threonyl-[protein] + ATP = O-phospho-L-threonyl-[protein] + ADP + H(+). Its activity is regulated as follows. Activated by forming a complex with STRAD (STRADA or STRADB) and CAB39/MO25 (CAB39/MO25alpha or CAB39L/MO25beta): STRADA (or STRADB)-binding promotes a conformational change of STK11/LKB1 in an active conformation, which is stabilized by CAB39/MO25alpha (or CAB39L/MO25beta) interacting with the STK11/LKB1 activation loop. Sequestration in the nucleus by NR4A1 prevents it from phosphorylating and activating cytoplasmic AMPK. In terms of biological role, tumor suppressor serine/threonine-protein kinase that controls the activity of AMP-activated protein kinase (AMPK) family members, thereby playing a role in various processes such as cell metabolism, cell polarity, apoptosis and DNA damage response. Acts by phosphorylating the T-loop of AMPK family proteins, thus promoting their activity: phosphorylates PRKAA1, PRKAA2, BRSK1, BRSK2, MARK1, MARK2, MARK3, MARK4, NUAK1, NUAK2, SIK1, SIK2, SIK3 and SNRK but not MELK. Also phosphorylates non-AMPK family proteins such as STRADA, PTEN and possibly p53/TP53. Acts as a key upstream regulator of AMPK by mediating phosphorylation and activation of AMPK catalytic subunits PRKAA1 and PRKAA2 and thereby regulates processes including: inhibition of signaling pathways that promote cell growth and proliferation when energy levels are low, glucose homeostasis in liver, activation of autophagy when cells undergo nutrient deprivation, and B-cell differentiation in the germinal center in response to DNA damage. Also acts as a regulator of cellular polarity by remodeling the actin cytoskeleton. Required for cortical neuron polarization by mediating phosphorylation and activation of BRSK1 and BRSK2, leading to axon initiation and specification. Involved in DNA damage response: interacts with p53/TP53 and recruited to the CDKN1A/WAF1 promoter to participate in transcription activation. Able to phosphorylate p53/TP53; the relevance of such result in vivo is however unclear and phosphorylation may be indirect and mediated by downstream STK11/LKB1 kinase NUAK1. Also acts as a mediator of p53/TP53-dependent apoptosis via interaction with p53/TP53: translocates to the mitochondrion during apoptosis and regulates p53/TP53-dependent apoptosis pathways. Regulates UV radiation-induced DNA damage response mediated by CDKN1A. In association with NUAK1, phosphorylates CDKN1A in response to UV radiation and contributes to its degradation which is necessary for optimal DNA repair. Functionally, has a role in spermiogenesis. This Mus musculus (Mouse) protein is Serine/threonine-protein kinase STK11.